A 141-amino-acid chain; its full sequence is Galactose-6-phosphate isomerase subunit LacA 1 (141 aa).

It belongs to the LacAB/RpiB family. As to quaternary structure, heteromultimeric protein consisting of LacA and LacB.

It catalyses the reaction aldehydo-D-galactose 6-phosphate = keto-D-tagatose 6-phosphate. Its pathway is carbohydrate metabolism; D-galactose 6-phosphate degradation; D-tagatose 6-phosphate from D-galactose 6-phosphate: step 1/1. The polypeptide is Galactose-6-phosphate isomerase subunit LacA 1 (Streptococcus pyogenes serotype M3 (strain SSI-1)).